The following is a 716-amino-acid chain: Pyruvate/proton symporter BtsT (716 aa).

Topologically, residues 1–5 are cytoplasmic; it reads MDTKK. A helical transmembrane segment spans residues 6-26; it reads IFKHIPWVILGIIGAFCLAVV. The Periplasmic segment spans residues 27–30; the sequence is ALRR. The helical transmembrane segment at 31–51 threads the bilayer; that stretch reads GEHISALWIVVASVSVYLVAY. Topologically, residues 52–88 are cytoplasmic; that stretch reads RYYSLYIAQKVMKLDPTRATPAVINNDGLNYVPTNRY. Residues 89–109 form a helical membrane-spanning segment; the sequence is VLFGHHFAAIAGAGPLVGPVL. The Periplasmic portion of the chain corresponds to 110 to 119; the sequence is AAQMGYLPGT. A helical transmembrane segment spans residues 120 to 140; it reads LWLLAGVVLAGAVQDFMVLFI. Topologically, residues 141 to 163 are cytoplasmic; that stretch reads SSRRNGASLGEMIKEEMGPVPGT. Residues 164 to 184 traverse the membrane as a helical segment; it reads IALFGCFLIMIIILAVLALIV. The Periplasmic segment spans residues 185–191; the sequence is VKALAES. Residues 192 to 212 form a helical membrane-spanning segment; that stretch reads PWGVFTVCSTVPIALFMGIYM. Residues 213-222 are Cytoplasmic-facing; the sequence is RFIRPGRVGE. Residues 223 to 243 form a helical membrane-spanning segment; sequence VSVIGIVLLVASIYFGGVIAH. The Periplasmic segment spans residues 244–257; sequence DPYWGPALTFKDTT. The helical transmembrane segment at 258–278 threads the bilayer; that stretch reads ITFALIGYAFVSALLPVWLIL. The Cytoplasmic segment spans residues 279 to 282; that stretch reads APRD. A helical membrane pass occupies residues 283–303; it reads YLATFLKIGVIVGLALGIVVL. At 304–326 the chain is on the periplasmic side; it reads NPELKMPAMTQYIDGTGPLWKGA. A helical membrane pass occupies residues 327–347; sequence LFPFLFITIACGAVSGFHALI. The Cytoplasmic portion of the chain corresponds to 348 to 374; the sequence is SSGTTPKLLANETDARFIGYGAMLMES. The helical transmembrane segment at 375 to 395 threads the bilayer; the sequence is FVAIMALVAASIIEPGLYFAM. Topologically, residues 396–484 are periplasmic; it reads NTPPAGLGIT…HVFHKVLPMA (89 aa). The chain crosses the membrane as a helical span at residues 485 to 505; sequence DMGFWYHFGILFEALFILTAL. Residues 506–531 lie on the Cytoplasmic side of the membrane; it reads DAGTRSGRFMLQDLLGNFIPFLKKTD. A helical transmembrane segment spans residues 532–552; the sequence is SLVAGIIGTAGCVGLWGYLLY. Residues 553 to 568 lie on the Periplasmic side of the membrane; sequence QGVVDPLGGVKSLWPL. A helical transmembrane segment spans residues 569–589; it reads FGISNQMLAAVALVLGTVVLI. At 590 to 596 the chain is on the cytoplasmic side; the sequence is KMKRTQY. Residues 597 to 617 form a helical membrane-spanning segment; it reads IWVTVVPAVWLLICTTWALGL. Residues 618–668 lie on the Periplasmic side of the membrane; sequence KLFSTNPQMEGFFYMASQYKEKIANGTDLTAQQIANMNHIVVNNYTNAGLS. The chain crosses the membrane as a helical span at residues 669 to 689; sequence ILFLIVVYSIIFYGFKTWLAV. The Cytoplasmic portion of the chain corresponds to 690-716; it reads RNSDKRTDKETPYVPIPEGGVKISSHH. A disordered region spans residues 696 to 716; sequence TDKETPYVPIPEGGVKISSHH.

The protein belongs to the peptide transporter carbon starvation (CstA) (TC 2.A.114) family. Interacts with BtsS and YpdA.

It localises to the cell inner membrane. It carries out the reaction pyruvate(out) + H(+)(out) = pyruvate(in) + H(+)(in). With respect to regulation, transport is inhibited by the protonophores 2,4-dinitrophenol (DNP) and carbonyl cyanide m-chlorophenyl hydrazone (CCCP), but not by ionophores such as valinomycin, nonactin and nigericin. Functionally, transports pyruvate with a high affinity and specificity. The process is driven by the proton motive force. Under nutrient limiting conditions, mediates the uptake of pyruvate, thus enabling it to be used as a carbon source for the growth and survival. Part of a nutrient-sensing regulatory network composed of the two-component regulatory systems BtsS/BtsR and YpdA/YpdB, and their respective target proteins, BtsT and YhjX. The protein is Pyruvate/proton symporter BtsT of Escherichia coli (strain K12).